A 221-amino-acid polypeptide reads, in one-letter code: Leucyl/phenylalanyl-tRNA--protein transferase (221 aa).

The protein belongs to the L/F-transferase family.

The protein resides in the cytoplasm. The enzyme catalyses N-terminal L-lysyl-[protein] + L-leucyl-tRNA(Leu) = N-terminal L-leucyl-L-lysyl-[protein] + tRNA(Leu) + H(+). It catalyses the reaction N-terminal L-arginyl-[protein] + L-leucyl-tRNA(Leu) = N-terminal L-leucyl-L-arginyl-[protein] + tRNA(Leu) + H(+). It carries out the reaction L-phenylalanyl-tRNA(Phe) + an N-terminal L-alpha-aminoacyl-[protein] = an N-terminal L-phenylalanyl-L-alpha-aminoacyl-[protein] + tRNA(Phe). Functions in the N-end rule pathway of protein degradation where it conjugates Leu, Phe and, less efficiently, Met from aminoacyl-tRNAs to the N-termini of proteins containing an N-terminal arginine or lysine. This is Leucyl/phenylalanyl-tRNA--protein transferase from Phenylobacterium zucineum (strain HLK1).